A 268-amino-acid polypeptide reads, in one-letter code: Tryptophan synthase alpha chain (268 aa).

Active-site proton acceptor residues include Glu49 and Asp60.

Belongs to the TrpA family. As to quaternary structure, tetramer of two alpha and two beta chains.

The catalysed reaction is (1S,2R)-1-C-(indol-3-yl)glycerol 3-phosphate + L-serine = D-glyceraldehyde 3-phosphate + L-tryptophan + H2O. It functions in the pathway amino-acid biosynthesis; L-tryptophan biosynthesis; L-tryptophan from chorismate: step 5/5. In terms of biological role, the alpha subunit is responsible for the aldol cleavage of indoleglycerol phosphate to indole and glyceraldehyde 3-phosphate. This Escherichia coli (strain SMS-3-5 / SECEC) protein is Tryptophan synthase alpha chain.